The sequence spans 224 residues: MKKNIQIAIDGPAGAGKSTIAKIVAEALDFTYIDTGAMYRAVTYKAMQQNIHLDDEAKLAEMLAASTIDLKPSPQGQLVFLDGHNVSADIRSNEVTSSVSQVAAHAKVRELLVAQQQKLAANGGVVMDGRDIATHVLKNAELKIFMSATVEERARRRFIDNQKRGIDSSLEKLQEEIALRDKKDSEREASPLIQAEDAIFLDTTALSIDDAAQAILKLAEEKML.

11–19 lines the ATP pocket; sequence GPAGAGKST.

It belongs to the cytidylate kinase family. Type 1 subfamily.

The protein resides in the cytoplasm. The enzyme catalyses CMP + ATP = CDP + ADP. It carries out the reaction dCMP + ATP = dCDP + ADP. This is Cytidylate kinase from Lysinibacillus sphaericus (strain C3-41).